A 117-amino-acid polypeptide reads, in one-letter code: Acylphosphatase (117 aa).

Residues 21–107 (RWRFRIRGLV…TGADWFEIRP (87 aa)) form the Acylphosphatase-like domain. Active-site residues include Arg-36 and Asn-54.

Belongs to the acylphosphatase family.

The enzyme catalyses an acyl phosphate + H2O = a carboxylate + phosphate + H(+). This chain is Acylphosphatase (acyP), found in Synechococcus sp. (strain RCC307).